Here is a 357-residue protein sequence, read N- to C-terminus: Type II methyltransferase M1.HgaI (357 aa).

The SAM-dependent MTase C5-type domain occupies 5–357 (IMGLSLFSSA…NITREIFNEN (353 aa)). The active site involves Cys-83.

Belongs to the class I-like SAM-binding methyltransferase superfamily. C5-methyltransferase family.

It carries out the reaction a 2'-deoxycytidine in DNA + S-adenosyl-L-methionine = a 5-methyl-2'-deoxycytidine in DNA + S-adenosyl-L-homocysteine + H(+). A methylase that recognizes DNA with the sequence 5'-GCGTC-3', methylates C-2, and protects the DNA from cleavage by the HgaI endonuclease. This is Type II methyltransferase M1.HgaI (hgaIAM) from Avibacterium volantium (Pasteurella volantium).